The primary structure comprises 483 residues: GDP-fucose protein O-fucosyltransferase 4 (483 aa).

Residue Met-1 is a topological domain, cytoplasmic. A helical; Signal-anchor for type II membrane protein membrane pass occupies residues Ala-2–Val-21. Residues Asp-22–Arg-483 are Lumenal-facing. Residues Asn-151 and Asn-303 are each glycosylated (N-linked (GlcNAc...) asparagine). Cys-374 and Cys-377 are disulfide-bonded. The interval Arg-387–Val-425 is disordered. Residues Asn-406, Asn-428, Asn-456, and Asn-480 are each glycosylated (N-linked (GlcNAc...) asparagine).

It belongs to the glycosyltransferase 10 family.

It localises to the endoplasmic reticulum membrane. It catalyses the reaction L-threonyl-[protein] + GDP-beta-L-fucose = 3-O-(alpha-L-fucosyl)-L-threonyl-[protein] + GDP + H(+). It carries out the reaction L-seryl-[protein] + GDP-beta-L-fucose = 3-O-(alpha-L-fucosyl)-L-seryl-[protein] + GDP + H(+). It participates in protein modification; protein glycosylation. Its function is as follows. Protein O-fucosyltransferase that specifically catalyzes O-fucosylation of serine or threonine residues in EMI domains of target proteins. Attaches fucose through an O-glycosidic linkage. O-fucosylation of EMI domain-containing proteins may be required for facilitating protein folding and secretion. This chain is GDP-fucose protein O-fucosyltransferase 4 (fut11), found in Danio rerio (Zebrafish).